Here is a 91-residue protein sequence, read N- to C-terminus: DNA-binding protein HU (91 aa).

It belongs to the bacterial histone-like protein family.

Histone-like DNA-binding protein which is capable of wrapping DNA to stabilize it, and thus to prevent its denaturation under extreme environmental conditions. Also seems to act as a fortuitous virulence factor in delayed sequelae by binding to heparan sulfate-proteoglycans in the extracellular matrix of target organs and acting as a nidus for in situ immune complex formation. The polypeptide is DNA-binding protein HU (hup) (Streptococcus downei (Streptococcus sobrinus)).